A 142-amino-acid chain; its full sequence is MPIAAATDFALNAILRPISDIFVLIYGLLEPINAHLIPEHTNFIYGQLSLLLWGTKFLATILGVTANNATAMANFTDVLHTLSENSYHFFGTVEGESGMAYIAKHSYIELSQNQQLSEDMAVKFARAVNSTIIYFVKVFEYL.

The next 2 helical transmembrane spans lie at 12–29 (NAIL…YGLL) and 44–66 (IYGQ…GVTA).

It is found in the cell membrane. This is an uncharacterized protein from Archaeoglobus fulgidus (strain ATCC 49558 / DSM 4304 / JCM 9628 / NBRC 100126 / VC-16).